The sequence spans 444 residues: MVRDIVDDPLDEDDIALVKTYGLVPYSAPIKKVEKEIKELTEKINDLCGIKESDTGLAPLSKQMMQEGQPLQVGYVSCFRYIPIDLLMDIFSRVPAKSIARFRCVSKLWESILCRPDFKELFMTMSSIRPPLLLFTFQDDDGNLFFFSSPHPQIPCNENTSLVPTRYHVQHTTDSFSEIGSPLCGFICRRGKRNLDTMVICNPVTGESVSLPKVELKSINTETRPYLGYDPVRKQLKVLCIKSDDIPNTCDEHQVLTLENGNHLWRTIQCKPHYPKSDGICIDGILYYTAGFDMRARVSMVVCFDVRSEKFSFINIHVFMLMNDSCTLINYKGKLGALQFTCLSPKRLRFWVLVNAEKNIWTKCIYALPPLWNNLVQHTELAIVGMTDGGEVVLSQYCLIYAFYIYYFNLESKSLTRVQIQDVEMFKRTRVYTSLGYVENFKLM.

In terms of domain architecture, F-box spans 76–125 (VSCFRYIPIDLLMDIFSRVPAKSIARFRCVSKLWESILCRPDFKELFMTM).

In Arabidopsis thaliana (Mouse-ear cress), this protein is F-box protein At1g53790.